The following is a 200-amino-acid chain: Somatotropin (200 aa).

A signal peptide spans methionine 1–threonine 22. Residue histidine 38 coordinates Zn(2+). Cysteine 71 and cysteine 173 are oxidised to a cystine. Glutamate 182 lines the Zn(2+) pocket. A disulfide bridge connects residues cysteine 190 and cysteine 198.

The protein belongs to the somatotropin/prolactin family.

The protein localises to the secreted. Growth hormone plays an important role in growth control and is involved in the regulation of several anabolic processes. Implicated as an osmoregulatory substance important for seawater adaptation. This chain is Somatotropin (gh), found in Pangasianodon gigas (Mekong giant catfish).